The sequence spans 225 residues: AA9 family lytic polysaccharide monooxygenase A (225 aa).

The first 17 residues, 1 to 17 (MLTTTFALLTAALGVSA), serve as a signal peptide directing secretion. 2 residues coordinate Cu(2+): H18 and H85. 2 disulfides stabilise this stretch: C55–C173 and C143–C225. 2 residues coordinate O2: H159 and Q168. Y170 contacts Cu(2+).

Belongs to the polysaccharide monooxygenase AA9 family. Cu(2+) is required as a cofactor.

The protein localises to the secreted. The catalysed reaction is [(1-&gt;4)-beta-D-glucosyl]n+m + reduced acceptor + O2 = 4-dehydro-beta-D-glucosyl-[(1-&gt;4)-beta-D-glucosyl]n-1 + [(1-&gt;4)-beta-D-glucosyl]m + acceptor + H2O.. Is able to utilize various natural phenolic compounds as reducing agents. Most of these reducing agents are present in plants, either free or as lignin building blocks, such as sinapic acid, or as flavonoids such as catechin and dopamine. Phenolic compounds with 1,2-benzenediol and 1,2,3-benzenetriol moieties yield the highest release of oxidized and non-oxidized glucooligosaccharides from cellulose compared to monophenols or sulfur-containing compounds. Lytic polysaccharide monooxygenase (LPMO) that depolymerizes crystalline and amorphous polysaccharides via the oxidation of scissile alpha- or beta-(1-4)-glycosidic bonds, yielding C1 or C4 oxidation products. Catalysis by LPMOs requires the reduction of the active-site copper from Cu(II) to Cu(I) by a reducing agent and H(2)O(2) or O(2) as a cosubstrate. Shows oxidative cleavage of xylan in addition to cellulose. Shows a strong synergistic effect with endoglucanase I (EGI) with a 16-fold higher release of detected oligosaccharides. The sequence is that of AA9 family lytic polysaccharide monooxygenase A from Thermothelomyces thermophilus (strain ATCC 42464 / BCRC 31852 / DSM 1799) (Sporotrichum thermophile).